A 468-amino-acid polypeptide reads, in one-letter code: Trehalose-2-sulfate acyltransferase PapA2 (468 aa).

It belongs to the PapA acyltransferase family.

It catalyses the reaction 2-O-sulfo-alpha,alpha-trehalose + hexadecanoyl-CoA = 2-O-sulfo-2'-O-hexadecanoyl-alpha,alpha-trehalose + CoA. In terms of biological role, catalyzes the acylation of trehalose-2-sulfate by adding the palmitoyl group at the 2'-position to yield the intermediate trehalose-2-sulfate-2'-palmitate (SL659). This is Trehalose-2-sulfate acyltransferase PapA2 (papA2) from Mycobacterium tuberculosis (strain ATCC 25177 / H37Ra).